We begin with the raw amino-acid sequence, 456 residues long: Phosphomannomutase (456 aa).

The active-site Phosphoserine intermediate is Ser-98. Residues Ser-98, Asp-245, Asp-247, and Asp-249 each contribute to the Mg(2+) site.

The protein belongs to the phosphohexose mutase family. Requires Mg(2+) as cofactor.

It catalyses the reaction alpha-D-mannose 1-phosphate = D-mannose 6-phosphate. Its pathway is nucleotide-sugar biosynthesis; GDP-alpha-D-mannose biosynthesis; alpha-D-mannose 1-phosphate from D-fructose 6-phosphate: step 2/2. The protein operates within bacterial outer membrane biogenesis; LPS O-antigen biosynthesis. Involved in GDP-mannose biosynthesis which serves as the activated sugar nucleotide precursor for mannose residues in cell surface polysaccharides. This enzyme participates in synthesis of the LPS O antigen. This chain is Phosphomannomutase (manB), found in Salmonella montevideo.